Consider the following 558-residue polypeptide: Protein NRT1/ PTR FAMILY 2.3 (558 aa).

12 helical membrane passes run 33 to 53 (TLLG…VFLI), 69 to 89 (VANG…DSFF), 92 to 112 (IPVI…LTLI), 128 to 148 (VLCT…LALV), 176 to 196 (FFNW…TAIV), 203 to 223 (SWKL…IVFV), 329 to 349 (LWLS…LIVL), 371 to 391 (VIII…VFPM), 403 to 423 (LQKV…SAVV), 439 to 459 (VLWL…QFPA), 478 to 498 (SLTS…IDLI), and 517 to 537 (VYWL…VCSW).

It belongs to the major facilitator superfamily. Proton-dependent oligopeptide transporter (POT/PTR) (TC 2.A.17) family. As to expression, expressed in flowers, siliques and root epidermis or cortex. Detected in shoots.

It is found in the membrane. In terms of biological role, transporter involved in a passive nitrate efflux. This is Protein NRT1/ PTR FAMILY 2.3 (NPF2.3) from Arabidopsis thaliana (Mouse-ear cress).